Reading from the N-terminus, the 288-residue chain is Probable ketoamine kinase SAOUHSC_02908 (288 aa).

86–88 (TYL) contributes to the ATP binding site. Residue Asp-191 is the Proton acceptor of the active site.

Belongs to the fructosamine kinase family.

It carries out the reaction N(6)-(D-ribulosyl)-L-lysine + ATP = N(6)-(3-O-phospho-D-ribulosyl)-L-lysine + ADP + H(+). The enzyme catalyses N(6)-(D-erythrulosyl)-L-lysine + ATP = N(6)-(3-O-phospho-D-erythrulosyl)-L-lysine + ADP + H(+). It catalyses the reaction N(6)-D-ribulosyl-L-lysyl-[protein] + ATP = N(6)-(3-O-phospho-D-ribulosyl)-L-lysyl-[protein] + ADP + H(+). The catalysed reaction is N(6)-(D-erythrulosyl)-L-lysyl-[protein] + ATP = N(6)-(3-O-phospho-D-erythrulosyl)-L-lysyl-[protein] + ADP + H(+). Functionally, ketoamine kinase that phosphorylates ketoamines, such as erythruloselysine and ribuloselysine, on the third carbon of the sugar moiety to generate ketoamine 3-phosphate. Has higher activity on free lysine (erythruloselysine and ribuloselysine), than on ribuloselysine and erythruloselysine residues on glycated proteins. In Staphylococcus aureus (strain NCTC 8325 / PS 47), this protein is Probable ketoamine kinase SAOUHSC_02908.